Consider the following 545-residue polypeptide: Probable intron-encoded endonuclease 4 (545 aa).

7 helical membrane passes run 1–21 (MYLSIIILPLLGSIVAGFFGR), 30–50 (LITCLSVIITTGLAILAFFEV), 81–101 (LTVAMLIPVLIISSLVHIYSI), 119–139 (LFTFMMIILVTANNYLLMFVG), 140–160 (WEGVGVCSYLLVSFWFTRIAA), 177–197 (FLTIGMFVVLWTLGNLDYATV), and 200–220 (LAPYINSDIATIIGICLLIGA). Residues 1 to 239 (MYLSIIILPL…HVWLPMAMEG (239 aa)) are ndh-5 exons 1 and 2 encoded. A ndh-5 intron 2 encoded region spans residues 240–545 (FFSRAFLKLH…NNINKSDYNK (306 aa)).

In the N-terminal section; belongs to the complex I subunit 5 family. The protein in the C-terminal section; belongs to the LAGLIDADG endonuclease family.

The protein resides in the mitochondrion membrane. Functionally, mitochondrial DNA endonuclease involved in intron homing. The chain is Probable intron-encoded endonuclease 4 from Neurospora crassa (strain ATCC 24698 / 74-OR23-1A / CBS 708.71 / DSM 1257 / FGSC 987).